A 432-amino-acid chain; its full sequence is Chorismate synthase aro-2 (432 aa).

Active-site residues include H17, H106, and D367. Residues 406 to 432 (LKQTINSGKDTVGNGVSENVQESDLAQ) form a disordered region. Polar residues predominate over residues 408-432 (QTINSGKDTVGNGVSENVQESDLAQ).

This sequence belongs to the chorismate synthase family. As to quaternary structure, homotetramer.

It catalyses the reaction 5-O-(1-carboxyvinyl)-3-phosphoshikimate = chorismate + phosphate. The enzyme catalyses FMNH2 + NADP(+) = FMN + NADPH + 2 H(+). It participates in metabolic intermediate biosynthesis; chorismate biosynthesis; chorismate from D-erythrose 4-phosphate and phosphoenolpyruvate: step 7/7. Its function is as follows. Bifunctional chorismate synthase and flavin reductase that catalyzes the conversion of 5-enolpyruvylshikimate 3-phosphate (EPSP) to form chorismate, which is the last common intermediate in the synthesis of the three aromatic amino acids phenylalanine, tyrosine and tryptophan. Acts also as a flavin reductase (FR) able to generate reduced flavin mononucleotide in the presence of NADPH. The sequence is that of Chorismate synthase aro-2 from Neurospora crassa (strain ATCC 24698 / 74-OR23-1A / CBS 708.71 / DSM 1257 / FGSC 987).